The sequence spans 554 residues: 7-epi-sesquithujene synthase (554 aa).

Mg(2+) contacts are provided by Asp-308 and Asp-312. Residues Asp-308, Asp-312, Arg-449, and Asn-452 each coordinate substrate. The short motif at 308–312 (DDMFD) is the DDXXD motif element. Residues Asn-452, Ser-456, and Glu-460 each coordinate Mg(2+).

This sequence belongs to the terpene synthase family. In terms of assembly, monomer. Requires Mg(2+) as cofactor. It depends on Mn(2+) as a cofactor. In terms of tissue distribution, highly expressed in the husk. Detected in leaf sheaths and leaves.

The protein localises to the cytoplasm. The catalysed reaction is (2E,6E)-farnesyl diphosphate = 7-epi-sesquithujene + diphosphate. It carries out the reaction (2E,6E)-farnesyl diphosphate = (1S,5S,6R)-alpha-bergamotene + diphosphate. It catalyses the reaction (2E,6E)-farnesyl diphosphate = (E)-beta-farnesene + diphosphate. The enzyme catalyses (2E,6E)-farnesyl diphosphate = (S)-beta-bisabolene + diphosphate. The catalysed reaction is (2Z,6E)-farnesyl diphosphate = (-)-beta-curcumene + diphosphate. It carries out the reaction (2E,6E)-farnesyl diphosphate = gamma-curcumene + diphosphate. It catalyses the reaction (2E,6E)-farnesyl diphosphate = sesquisabinene A + diphosphate. It participates in secondary metabolite biosynthesis; terpenoid biosynthesis. Functionally, sesquiterpene synthase involved in the production after herbivore attack of a blend of volatiles that attracts natural enemies of herbivores. Converts farnesyl diphosphate to (S)-beta-bisabolene and 7-epi-sesquithujene, along with a mixture of more than 20 other minor sesquiterpene olefins. Can also act in vitro as a monoterpene synthase, converting geranyl diphosphate to (S)-(-)-limonene, beta-myrcene and 11 other monoterpenes. This chain is 7-epi-sesquithujene synthase, found in Zea mays (Maize).